A 307-amino-acid chain; its full sequence is Mitochondrial thiamine pyrophosphate carrier 1 (307 aa).

3 Solcar repeats span residues 13-95 (VSTT…IGSF), 105-190 (SPQL…IKIF), and 203-305 (PFTL…FMNK). 6 helical membrane passes run 19–36 (LVAG…IAPL), 76–96 (IMYI…GSFL), 108–126 (LYSC…LASY), 160–184 (MGFF…FGVY), 210–226 (LAGP…TFPL), and 280–297 (GVTM…ISLW).

The protein belongs to the mitochondrial carrier (TC 2.A.29) family.

Its subcellular location is the mitochondrion inner membrane. Functionally, mitochondrial transporter that mediates uptake of thiamine pyrophosphate (ThPP) into mitochondria. In Candida glabrata (strain ATCC 2001 / BCRC 20586 / JCM 3761 / NBRC 0622 / NRRL Y-65 / CBS 138) (Yeast), this protein is Mitochondrial thiamine pyrophosphate carrier 1 (TPC1).